A 202-amino-acid polypeptide reads, in one-letter code: UPF0102 protein Dde_1093 (202 aa).

Belongs to the UPF0102 family.

In Oleidesulfovibrio alaskensis (strain ATCC BAA-1058 / DSM 17464 / G20) (Desulfovibrio alaskensis), this protein is UPF0102 protein Dde_1093.